The sequence spans 135 residues: Protein NrdI (135 aa).

Belongs to the NrdI family.

Functionally, probably involved in ribonucleotide reductase function. The chain is Protein NrdI from Brucella abortus (strain S19).